The primary structure comprises 281 residues: Urease accessory protein UreD (281 aa).

This sequence belongs to the UreD family. UreD, UreF and UreG form a complex that acts as a GTP-hydrolysis-dependent molecular chaperone, activating the urease apoprotein by helping to assemble the nickel containing metallocenter of UreC. The UreE protein probably delivers the nickel.

It is found in the cytoplasm. Required for maturation of urease via the functional incorporation of the urease nickel metallocenter. This chain is Urease accessory protein UreD, found in Pseudomonas savastanoi pv. phaseolicola (strain 1448A / Race 6) (Pseudomonas syringae pv. phaseolicola (strain 1448A / Race 6)).